Here is a 121-residue protein sequence, read N- to C-terminus: Large ribosomal subunit protein bL12 (121 aa).

Belongs to the bacterial ribosomal protein bL12 family. As to quaternary structure, homodimer. Part of the ribosomal stalk of the 50S ribosomal subunit. Forms a multimeric L10(L12)X complex, where L10 forms an elongated spine to which 2 to 4 L12 dimers bind in a sequential fashion. Binds GTP-bound translation factors.

Forms part of the ribosomal stalk which helps the ribosome interact with GTP-bound translation factors. Is thus essential for accurate translation. This is Large ribosomal subunit protein bL12 from Escherichia coli O81 (strain ED1a).